Reading from the N-terminus, the 328-residue chain is Spermatogenesis- and oogenesis-specific basic helix-loop-helix-containing protein 1 (328 aa).

The bHLH domain maps to Ser-53 to Ala-104. A disordered region spans residues Glu-290–Ala-328. A compositionally biased stretch (low complexity) spans Gly-310–Gly-321.

As to quaternary structure, forms both hetero- and homodimers with SOHLH2.

The protein localises to the cytoplasm. It localises to the nucleus. Functionally, transcription regulator of both male and female germline differentiation. Suppresses genes involved in spermatogonial stem cells maintenance, and induces genes important for spermatogonial differentiation. Coordinates oocyte differentiation without affecting meiosis I. The sequence is that of Spermatogenesis- and oogenesis-specific basic helix-loop-helix-containing protein 1 (SOHLH1) from Homo sapiens (Human).